The sequence spans 157 residues: Regulatory protein RecX (157 aa).

The protein belongs to the RecX family.

The protein localises to the cytoplasm. Functionally, modulates RecA activity. The chain is Regulatory protein RecX from Leptothrix cholodnii (strain ATCC 51168 / LMG 8142 / SP-6) (Leptothrix discophora (strain SP-6)).